The following is a 292-amino-acid chain: 4-diphosphocytidyl-2-C-methyl-D-erythritol kinase (292 aa).

K11 is a catalytic residue. 95-105 is an ATP binding site; it reads PVSAGLAGGSS. D137 is an active-site residue.

This sequence belongs to the GHMP kinase family. IspE subfamily.

It catalyses the reaction 4-CDP-2-C-methyl-D-erythritol + ATP = 4-CDP-2-C-methyl-D-erythritol 2-phosphate + ADP + H(+). The protein operates within isoprenoid biosynthesis; isopentenyl diphosphate biosynthesis via DXP pathway; isopentenyl diphosphate from 1-deoxy-D-xylulose 5-phosphate: step 3/6. Its function is as follows. Catalyzes the phosphorylation of the position 2 hydroxy group of 4-diphosphocytidyl-2C-methyl-D-erythritol. This Alkaliphilus oremlandii (strain OhILAs) (Clostridium oremlandii (strain OhILAs)) protein is 4-diphosphocytidyl-2-C-methyl-D-erythritol kinase.